The chain runs to 188 residues: Actin-related protein 2/3 complex subunit 3 (188 aa).

This sequence belongs to the ARPC3 family. As to quaternary structure, component of the Arp2/3 complex.

The protein resides in the cytoplasm. It is found in the cytoskeleton. Its function is as follows. Functions as a component of the Arp2/3 complex which is involved in regulation of actin polymerization and together with an activating nucleation-promoting factor (NPF) mediates the formation of branched actin networks. This Entamoeba histolytica (strain ATCC 30459 / HM-1:IMSS / ABRM) protein is Actin-related protein 2/3 complex subunit 3.